The primary structure comprises 278 residues: 1-acyl-sn-glycerol-3-phosphate acyltransferase beta (278 aa).

The first 23 residues, 1–23 (MELWPCLAAALLLLLLLVQLSRA), serve as a signal peptide directing secretion. At 24–29 (AEFYAK) the chain is on the lumenal side. A helical transmembrane segment spans residues 30 to 50 (VALYCALCFTVSAVASLVCLL). The Cytoplasmic portion of the chain corresponds to 51–121 (RHGGRTVENM…PERCVQIAKR (71 aa)). An HXXXXD motif motif is present at residues 98 to 103 (HQSILD). The helical transmembrane segment at 122–142 (ELLFLGPVGLIMYLGGVFFIN) threads the bilayer. Topologically, residues 143–278 (RQRSSTAMTV…TAGSGVQPAQ (136 aa)) are lumenal. The short motif at 172 to 175 (EGTR) is the EGTR motif element.

Belongs to the 1-acyl-sn-glycerol-3-phosphate acyltransferase family. In terms of tissue distribution, expressed predominantly in adipose tissue, pancreas and liver.

The protein resides in the endoplasmic reticulum membrane. The catalysed reaction is a 1-acyl-sn-glycero-3-phosphate + an acyl-CoA = a 1,2-diacyl-sn-glycero-3-phosphate + CoA. The enzyme catalyses 1-(9Z-octadecenoyl)-sn-glycero-3-phosphate + (9Z)-octadecenoyl-CoA = 1,2-di-(9Z-octadecenoyl)-sn-glycero-3-phosphate + CoA. It carries out the reaction 1-(9Z-octadecenoyl)-sn-glycero-3-phosphate + hexadecanoyl-CoA = 1-(9Z)-octadecenoyl-2-hexadecanoyl-sn-glycero-3-phosphate + CoA. It catalyses the reaction heptadecanoyl-CoA + 1-(9Z-octadecenoyl)-sn-glycero-3-phosphate = 1-(9Z)-octadecenoyl-2-heptadecanoyl-sn-glycero-3-phosphate + CoA. The catalysed reaction is 1-(9Z-octadecenoyl)-sn-glycero-3-phosphate + (9Z,12Z)-octadecadienoyl-CoA = 1-(9Z)-octadecenoyl-2-(9Z,12Z)-octadecadienoyl-sn-glycero-3-phosphate + CoA. The enzyme catalyses 1-(9Z-octadecenoyl)-sn-glycero-3-phosphate + tetradecanoyl-CoA = 1-(9Z)-octadecenoyl-2-tetradecanoyl-sn-glycero-3-phosphate + CoA. It carries out the reaction pentadecanoyl-CoA + 1-(9Z-octadecenoyl)-sn-glycero-3-phosphate = 1-(9Z)-octadecenoyl-2-pentadecanoyl-sn-glycero-3-phosphate + CoA. It catalyses the reaction 1-hexadecanoyl-sn-glycero-3-phosphate + (9Z)-octadecenoyl-CoA = 1-hexadecanoyl-2-(9Z-octadecenoyl)-sn-glycero-3-phosphate + CoA. The catalysed reaction is 1-tetradecanoyl-sn-glycerol 3-phosphate + (9Z)-octadecenoyl-CoA = 1-tetradecanoyl-2-(9Z)-octadecenoyl-sn-glycero-3-phosphate + CoA. The enzyme catalyses 1-(9Z,12Z,15Z)-octadecatrienoyl-sn-glycero-3-phosphate + (9Z)-octadecenoyl-CoA = 1-(9Z,12Z,15Z)-octadecatrienoyl-2-(9Z)-octadecenoyl-sn-glycero-3-phosphate + CoA. It carries out the reaction 1-(6Z,9Z,12Z-octadecatrienoyl)-sn-glycero-3-phosphate + (9Z)-octadecenoyl-CoA = (6Z,9Z,12Z)-octadecatrienoyl-2-(9Z)-octadecenoyl-sn-glycero-3-phosphate + CoA. It catalyses the reaction 1-eicosanoyl-sn-glycero-3-phosphate + (9Z)-octadecenoyl-CoA = 1-eicosanoyl-2-(9Z)-octadecenoyl-sn-glycero-3-phosphate + CoA. The catalysed reaction is 1-hexadecanoyl-sn-glycero-3-phosphate + octadecanoyl-CoA = 1-hexadecanoyl-2-octadecanoyl-sn-glycero-3-phosphate + CoA. The enzyme catalyses 1-hexadecanoyl-sn-glycero-3-phosphate + (5Z,8Z,11Z,14Z)-eicosatetraenoyl-CoA = 1-hexadecanoyl-2-(5Z,8Z,11Z,14Z-eicosatetraenoyl)-sn-glycero-3-phosphate + CoA. It carries out the reaction 1-hexadecanoyl-sn-glycero-3-phosphate + hexadecanoyl-CoA = 1,2-dihexadecanoyl-sn-glycero-3-phosphate + CoA. It catalyses the reaction 1-hexadecanoyl-sn-glycero-3-phosphate + tetradecanoyl-CoA = 1-hexadecanoyl-2-tetradecanoyl-sn-glycero-3-phosphate + CoA. The catalysed reaction is (11Z)-octadecenoyl-CoA + 1-(9Z-octadecenoyl)-sn-glycero-3-phosphate = 1-(9Z)-octadecenoyl-2-(11Z)-octadecenoyl-sn-glycero-3-phosphate + CoA. Its pathway is phospholipid metabolism; CDP-diacylglycerol biosynthesis; CDP-diacylglycerol from sn-glycerol 3-phosphate: step 2/3. In terms of biological role, converts 1-acyl-sn-glycerol-3-phosphate (lysophosphatidic acid or LPA) into 1,2-diacyl-sn-glycerol-3-phosphate (phosphatidic acid or PA) by incorporating an acyl moiety at the sn-2 position of the glycerol backbone. This is 1-acyl-sn-glycerol-3-phosphate acyltransferase beta (AGPAT2) from Homo sapiens (Human).